We begin with the raw amino-acid sequence, 321 residues long: Anthranilate phosphoribosyltransferase (321 aa).

5-phospho-alpha-D-ribose 1-diphosphate-binding positions include G72, G75–D76, T80, N82–T85, K99–S107, and S111. Residue G72 participates in anthranilate binding. S84 lines the Mg(2+) pocket. N102 is a binding site for anthranilate. Position 157 (R157) interacts with anthranilate. Mg(2+)-binding residues include D216 and E217.

Belongs to the anthranilate phosphoribosyltransferase family. Homodimer. Mg(2+) is required as a cofactor.

The catalysed reaction is N-(5-phospho-beta-D-ribosyl)anthranilate + diphosphate = 5-phospho-alpha-D-ribose 1-diphosphate + anthranilate. Its pathway is amino-acid biosynthesis; L-tryptophan biosynthesis; L-tryptophan from chorismate: step 2/5. Catalyzes the transfer of the phosphoribosyl group of 5-phosphorylribose-1-pyrophosphate (PRPP) to anthranilate to yield N-(5'-phosphoribosyl)-anthranilate (PRA). The chain is Anthranilate phosphoribosyltransferase from Methanococcus maripaludis (strain C7 / ATCC BAA-1331).